Reading from the N-terminus, the 490-residue chain is NAI2-like protein (490 aa).

The N-terminal stretch at 1 to 24 (MGRKYVVLGLAVCLFLSSFNEVSC) is a signal peptide. Disordered stretches follow at residues 43-83 (EEGE…VDKF) and 155-206 (AATN…FNKG). The stretch at 136-163 (IADERRQRLEDIERKLKAAAATNIVVED) forms a coiled coil. Over residues 171-183 (KVEETQEVVKFES) the composition is skewed to basic and acidic residues. Over residues 184 to 199 (ESSSASSESRRQSSSS) the composition is skewed to low complexity. Residues 433–465 (TFEKTVANLSRVIEEASQAYEEYHVVVRKWKEE) adopt a coiled-coil conformation.

In Arabidopsis thaliana (Mouse-ear cress), this protein is NAI2-like protein.